The chain runs to 242 residues: MEVKQISESTIKITIKLEDLEEHGMEMADFLVPQEKTEEFFYTILDELEMPESFLDSGMLSFRVTPKPDKLDVFVTKSKVDKNLNFEDLADLPDMDELSQMTPDEFLKTLEKNIFEKSRDDIDAVQMLEKAEEEDTSEPEEGQEQDRYIYYILRFSDLKNLIAFTKTVDYPVDTSELYKMDQRYYLTILVDIEGRPSRYPAWLLAAMREHAEDTDTTRALLQEHGHLLIVTDAVQHLQKVNC.

Belongs to the MecA family. As to quaternary structure, homodimer.

Functionally, enables the recognition and targeting of unfolded and aggregated proteins to the ClpC protease or to other proteins involved in proteolysis. The sequence is that of Adapter protein MecA from Streptococcus gordonii (strain Challis / ATCC 35105 / BCRC 15272 / CH1 / DL1 / V288).